The primary structure comprises 314 residues: Electron transfer flavoprotein subunit alpha (314 aa).

FAD is bound at residue 253–281 (LYVAVGISGAIQHLAGMKDSKVIVAINKD).

It belongs to the ETF alpha-subunit/FixB family. As to quaternary structure, heterodimer of an alpha and a beta subunit. Requires FAD as cofactor.

In terms of biological role, the electron transfer flavoprotein serves as a specific electron acceptor for other dehydrogenases. It transfers the electrons to the main respiratory chain via ETF-ubiquinone oxidoreductase (ETF dehydrogenase). In Bradyrhizobium diazoefficiens (strain JCM 10833 / BCRC 13528 / IAM 13628 / NBRC 14792 / USDA 110), this protein is Electron transfer flavoprotein subunit alpha (etfA).